Here is a 321-residue protein sequence, read N- to C-terminus: Peroxidase 28 (321 aa).

Positions 1 to 21 are cleaved as a signal peptide; sequence MKIATFSVLLLLLFIFPVALA. Disulfide bonds link Cys-32–Cys-111, Cys-65–Cys-70, Cys-117–Cys-317, and Cys-196–Cys-228. Catalysis depends on His-63, which acts as the Proton acceptor. 5 residues coordinate Ca(2+): Asp-64, Val-67, Gly-69, Asp-71, and Ser-73. Pro-159 is a binding site for substrate. Residue His-189 participates in heme b binding. Thr-190 serves as a coordination point for Ca(2+). The Ca(2+) site is built by Asp-238, Thr-244, and Asp-249.

It belongs to the peroxidase family. Classical plant (class III) peroxidase subfamily. Heme b serves as cofactor. Ca(2+) is required as a cofactor.

Its subcellular location is the secreted. The catalysed reaction is 2 a phenolic donor + H2O2 = 2 a phenolic radical donor + 2 H2O. Its function is as follows. Removal of H(2)O(2), oxidation of toxic reductants, biosynthesis and degradation of lignin, suberization, auxin catabolism, response to environmental stresses such as wounding, pathogen attack and oxidative stress. These functions might be dependent on each isozyme/isoform in each plant tissue. The protein is Peroxidase 28 (PER28) of Arabidopsis thaliana (Mouse-ear cress).